Reading from the N-terminus, the 251-residue chain is Triosephosphate isomerase (251 aa).

9–11 lines the substrate pocket; that stretch reads NWK. The active-site Electrophile is the His95. The Proton acceptor role is filled by Glu167. Residues Gly173, Ser213, and 234 to 235 contribute to the substrate site; that span reads GG. Ser213 is modified (phosphoserine).

This sequence belongs to the triosephosphate isomerase family. Homodimer.

The protein localises to the cytoplasm. It catalyses the reaction D-glyceraldehyde 3-phosphate = dihydroxyacetone phosphate. It participates in carbohydrate biosynthesis; gluconeogenesis. It functions in the pathway carbohydrate degradation; glycolysis; D-glyceraldehyde 3-phosphate from glycerone phosphate: step 1/1. Functionally, involved in the gluconeogenesis. Catalyzes stereospecifically the conversion of dihydroxyacetone phosphate (DHAP) to D-glyceraldehyde-3-phosphate (G3P). The chain is Triosephosphate isomerase from Bacillus cereus (strain ATCC 10987 / NRS 248).